The sequence spans 547 residues: Chaperonin GroEL (547 aa).

ATP contacts are provided by residues 30–33 (TLGP), K51, 87–91 (DGTTT), G415, 479–481 (NAA), and D495.

Belongs to the chaperonin (HSP60) family. Forms a cylinder of 14 subunits composed of two heptameric rings stacked back-to-back. Interacts with the co-chaperonin GroES.

It is found in the cytoplasm. It catalyses the reaction ATP + H2O + a folded polypeptide = ADP + phosphate + an unfolded polypeptide.. Together with its co-chaperonin GroES, plays an essential role in assisting protein folding. The GroEL-GroES system forms a nano-cage that allows encapsulation of the non-native substrate proteins and provides a physical environment optimized to promote and accelerate protein folding. This is Chaperonin GroEL from Delftia acidovorans (strain DSM 14801 / SPH-1).